Consider the following 831-residue polypeptide: AMP deaminase (831 aa).

3 disordered regions span residues Asn-26–Pro-45, Asn-66–Asn-110, and Asn-130–Thr-149. Phosphoserine occurs at positions 79 and 84. Positions 319 and 321 each coordinate Zn(2+). Residues His-321 and Lys-390–Tyr-395 each bind substrate. His-587 serves as a coordination point for Zn(2+). Substrate is bound at residue Glu-590. Catalysis depends on His-609, which acts as the Proton acceptor. Asp-664 serves as a coordination point for Zn(2+). Asp-665 to Gln-668 contacts substrate. Residues Ser-758, Ser-776, Ser-780, and Ser-782 each carry the phosphoserine modification.

The protein belongs to the metallo-dependent hydrolases superfamily. Adenosine and AMP deaminases family. As to quaternary structure, homotetramer. Requires Zn(2+) as cofactor.

It localises to the cytoplasm. The enzyme catalyses AMP + H2O + H(+) = IMP + NH4(+). It functions in the pathway purine metabolism; IMP biosynthesis via salvage pathway; IMP from AMP: step 1/1. Its function is as follows. AMP deaminase plays a critical role in energy metabolism. This Schizosaccharomyces pombe (strain 972 / ATCC 24843) (Fission yeast) protein is AMP deaminase (ada1).